Here is a 660-residue protein sequence, read N- to C-terminus: UvrABC system protein B (660 aa).

The Helicase ATP-binding domain maps to 27-414 (NGVNEGKRHQ…TDEMVQQIIR (388 aa)). Residue 40–47 (GATGTGKT) participates in ATP binding. A Beta-hairpin motif is present at residues 93–116 (YYDYYQPEAYVPSTDTFIEKDASI). Positions 431-593 (QIDDLLGEIQ…ITPTTINKKI (163 aa)) constitute a Helicase C-terminal domain. The disordered stretch occupies residues 603-622 (NDETNEQQQTEVPKKMTKKE). Residues 624–659 (EKTIANIEKEMKQAAKDLDFEKATELRDMLFELKAE) form the UVR domain.

It belongs to the UvrB family. Forms a heterotetramer with UvrA during the search for lesions. Interacts with UvrC in an incision complex.

Its subcellular location is the cytoplasm. The UvrABC repair system catalyzes the recognition and processing of DNA lesions. A damage recognition complex composed of 2 UvrA and 2 UvrB subunits scans DNA for abnormalities. Upon binding of the UvrA(2)B(2) complex to a putative damaged site, the DNA wraps around one UvrB monomer. DNA wrap is dependent on ATP binding by UvrB and probably causes local melting of the DNA helix, facilitating insertion of UvrB beta-hairpin between the DNA strands. Then UvrB probes one DNA strand for the presence of a lesion. If a lesion is found the UvrA subunits dissociate and the UvrB-DNA preincision complex is formed. This complex is subsequently bound by UvrC and the second UvrB is released. If no lesion is found, the DNA wraps around the other UvrB subunit that will check the other stand for damage. This chain is UvrABC system protein B, found in Staphylococcus saprophyticus subsp. saprophyticus (strain ATCC 15305 / DSM 20229 / NCIMB 8711 / NCTC 7292 / S-41).